Here is a 590-residue protein sequence, read N- to C-terminus: Mannosyl-oligosaccharide 1,2-alpha-mannosidase mans-2 (590 aa).

The Cytoplasmic segment spans residues Met1–Gln9. The helical; Signal-anchor for type II membrane protein transmembrane segment at Ala10–Ala30 threads the bilayer. At Ser31–Asn590 the chain is on the lumenal side. A compositionally biased stretch (basic and acidic residues) spans Pro88–Thr102. The disordered stretch occupies residues Pro88–Ala112. N-linked (GlcNAc...) asparagine glycans are attached at residues Asn156, Asn212, Asn373, and Asn402. A disulfide bridge links Cys423 with Cys456. The Proton donor role is filled by Glu470. Thr580 is a Ca(2+) binding site.

Belongs to the glycosyl hydrolase 47 family. It depends on Ca(2+) as a cofactor.

The protein resides in the membrane. It catalyses the reaction N(4)-(alpha-D-Man-(1-&gt;2)-alpha-D-Man-(1-&gt;2)-alpha-D-Man-(1-&gt;3)-[alpha-D-Man-(1-&gt;2)-alpha-D-Man-(1-&gt;3)-[alpha-D-Man-(1-&gt;2)-alpha-D-Man-(1-&gt;6)]-alpha-D-Man-(1-&gt;6)]-beta-D-Man-(1-&gt;4)-beta-D-GlcNAc-(1-&gt;4)-beta-D-GlcNAc)-L-asparaginyl-[protein] (N-glucan mannose isomer 9A1,2,3B1,2,3) + 4 H2O = N(4)-(alpha-D-Man-(1-&gt;3)-[alpha-D-Man-(1-&gt;3)-[alpha-D-Man-(1-&gt;6)]-alpha-D-Man-(1-&gt;6)]-beta-D-Man-(1-&gt;4)-beta-D-GlcNAc-(1-&gt;4)-beta-D-GlcNAc)-L-asparaginyl-[protein] (N-glucan mannose isomer 5A1,2) + 4 beta-D-mannose. The enzyme catalyses N(4)-(alpha-D-Man-(1-&gt;2)-alpha-D-Man-(1-&gt;2)-alpha-D-Man-(1-&gt;3)-[alpha-D-Man-(1-&gt;3)-[alpha-D-Man-(1-&gt;2)-alpha-D-Man-(1-&gt;6)]-alpha-D-Man-(1-&gt;6)]-beta-D-Man-(1-&gt;4)-beta-D-GlcNAc-(1-&gt;4)-beta-D-GlcNAc)-L-asparaginyl-[protein] (N-glucan mannose isomer 8A1,2,3B1,3) + 3 H2O = N(4)-(alpha-D-Man-(1-&gt;3)-[alpha-D-Man-(1-&gt;3)-[alpha-D-Man-(1-&gt;6)]-alpha-D-Man-(1-&gt;6)]-beta-D-Man-(1-&gt;4)-beta-D-GlcNAc-(1-&gt;4)-beta-D-GlcNAc)-L-asparaginyl-[protein] (N-glucan mannose isomer 5A1,2) + 3 beta-D-mannose. It functions in the pathway protein modification; protein glycosylation. In terms of biological role, involved in the maturation of Asn-linked oligosaccharides. Progressively trim alpha-1,2-linked mannose residues from Man(9)GlcNAc(2) to produce Man(5)GlcNAc(2). In Caenorhabditis elegans, this protein is Mannosyl-oligosaccharide 1,2-alpha-mannosidase mans-2.